Reading from the N-terminus, the 363-residue chain is Phosphoribosylformylglycinamidine cyclo-ligase (363 aa).

It belongs to the AIR synthase family.

The protein resides in the cytoplasm. It carries out the reaction 2-formamido-N(1)-(5-O-phospho-beta-D-ribosyl)acetamidine + ATP = 5-amino-1-(5-phospho-beta-D-ribosyl)imidazole + ADP + phosphate + H(+). It functions in the pathway purine metabolism; IMP biosynthesis via de novo pathway; 5-amino-1-(5-phospho-D-ribosyl)imidazole from N(2)-formyl-N(1)-(5-phospho-D-ribosyl)glycinamide: step 2/2. In Brucella anthropi (strain ATCC 49188 / DSM 6882 / CCUG 24695 / JCM 21032 / LMG 3331 / NBRC 15819 / NCTC 12168 / Alc 37) (Ochrobactrum anthropi), this protein is Phosphoribosylformylglycinamidine cyclo-ligase.